Consider the following 1028-residue polypeptide: SWI/SNF-related matrix-associated actin-dependent regulator of chromatin subfamily A containing DEAD/H box 1 (1028 aa).

M1 carries the N-acetylmethionine modification. A disordered region spans residues 13–81 (KRNKIEEAPE…PENDRKASIS (69 aa)). At T54 the chain carries Phosphothreonine. A Phosphoserine modification is found at S57. Position 71 is a phosphothreonine (T71). K77 participates in a covalent cross-link: Glycyl lysine isopeptide (Lys-Gly) (interchain with G-Cter in SUMO2). Phosphoserine is present on S79. K84 is covalently cross-linked (Glycyl lysine isopeptide (Lys-Gly) (interchain with G-Cter in SUMO2)). S124, S127, S132, and S153 each carry phosphoserine. The CUE 1 domain occupies 158-200 (YSDNLSTVRQTRYSENLSSDLLKLIDSTSTMDGAIAAALLMFG). 2 disordered regions span residues 204–253 (GGGP…NWEK) and 303–348 (ASPS…KRKK). Residues S213, S216, S241, and S244 each carry the phosphoserine modification. The CUE 2 domain maps to 253-296 (KQESIVLKLQKEFPNFDKEELREVLKEHEWMYTEALESLKVFAE). Residue S304 is modified to Phosphoserine. Glycyl lysine isopeptide (Lys-Gly) (interchain with G-Cter in SUMO2) cross-links involve residues K337 and K473. Positions 511 to 679 (ALVHKHGLNG…MSLLNFVMPH (169 aa)) constitute a Helicase ATP-binding domain. ATP is bound at residue 523-531 (ADEMGLGKT). The short motif at 630–633 (DEGH) is the DEGH box element. Residues 723–740 (RRVKEEVLKQLPPKKDRI) carry the Nuclear localization signal motif. K726 participates in a covalent cross-link: Glycyl lysine isopeptide (Lys-Gly) (interchain with G-Cter in SUMO2). Positions 860-1012 (VLGCILSELK…MTTVDEGDEG (153 aa)) constitute a Helicase C-terminal domain. Residue 899-906 (YLRLDGKT) participates in ATP binding. Residue K998 forms a Glycyl lysine isopeptide (Lys-Gly) (interchain with G-Cter in SUMO2) linkage. Positions 1007 to 1010 (DEGD) match the DEAD box motif.

The protein belongs to the SNF2/RAD54 helicase family. Binds to DNA preferentially in the vicinity of transcriptional start sites. Interacts with MSH2 and TRIM28. Part of a complex composed of TRIM28, HDAC1, HDAC2 and EHMT2. Interacts with PCNA.

Its subcellular location is the nucleus. It localises to the chromosome. It carries out the reaction ATP + H2O = ADP + phosphate + H(+). Its function is as follows. DNA helicase that possesses intrinsic ATP-dependent nucleosome-remodeling activity and is both required for DNA repair and heterochromatin organization. Promotes DNA end resection of double-strand breaks (DSBs) following DNA damage: probably acts by weakening histone DNA interactions in nucleosomes flanking DSBs. Required for the restoration of heterochromatin organization after replication. Acts at replication sites to facilitate the maintenance of heterochromatin by directing H3 and H4 histones deacetylation, H3 'Lys-9' trimethylation (H3K9me3) and restoration of silencing. The chain is SWI/SNF-related matrix-associated actin-dependent regulator of chromatin subfamily A containing DEAD/H box 1 (SMARCAD1) from Bos taurus (Bovine).